Consider the following 249-residue polypeptide: Ubiquinone biosynthesis protein COQ4 homolog, mitochondrial (249 aa).

Residues histidine 134, aspartate 135, histidine 138, and glutamate 150 each coordinate Zn(2+).

This sequence belongs to the COQ4 family. Component of a multi-subunit COQ enzyme complex. Requires Zn(2+) as cofactor.

It localises to the mitochondrion inner membrane. It catalyses the reaction a 4-hydroxy-3-methoxy-5-(all-trans-polyprenyl)benzoate + H(+) = a 2-methoxy-6-(all-trans-polyprenyl)phenol + CO2. The protein operates within cofactor biosynthesis; ubiquinone biosynthesis. Lyase that catalyzes the C1-decarboxylation of 4-hydroxy-3-methoxy-5-(all-trans-polyprenyl)benzoic acid into 2-methoxy-6-(all-trans-polyprenyl)phenol during ubiquinone biosynthesis. The polypeptide is Ubiquinone biosynthesis protein COQ4 homolog, mitochondrial (Trypanosoma brucei brucei (strain 927/4 GUTat10.1)).